A 407-amino-acid polypeptide reads, in one-letter code: Peptidase T (407 aa).

Histidine 81 contacts Zn(2+). Aspartate 83 is an active-site residue. Aspartate 142 contacts Zn(2+). The Proton acceptor role is filled by glutamate 176. The Zn(2+) site is built by glutamate 177, aspartate 199, and histidine 381.

The protein belongs to the peptidase M20B family. It depends on Zn(2+) as a cofactor.

The protein localises to the cytoplasm. The enzyme catalyses Release of the N-terminal residue from a tripeptide.. Its function is as follows. Cleaves the N-terminal amino acid of tripeptides. This is Peptidase T from Streptococcus pneumoniae (strain Hungary19A-6).